The primary structure comprises 742 residues: Zinc finger protein 280C (742 aa).

Residues lysine 10, lysine 23, lysine 42, lysine 65, lysine 85, lysine 123, and lysine 135 each participate in a glycyl lysine isopeptide (Lys-Gly) (interchain with G-Cter in SUMO2) cross-link. Positions 138 to 168 are enriched in polar residues; sequence FTKTSPQEDSGACSVSQSDSTQDIPSSNILQ. The segment at 138–243 is disordered; the sequence is FTKTSPQEDS…QSAPGSSSLR (106 aa). Glycyl lysine isopeptide (Lys-Gly) (interchain with G-Cter in SUMO2) cross-links involve residues lysine 180, lysine 186, and lysine 193. Residues 182-191 show a composition bias toward polar residues; that stretch reads PSTSKVNSVN. Residues 200–222 show a composition bias toward low complexity; that stretch reads SISETRPCSSSSSQTAPSGASSQ. Polar residues predominate over residues 223 to 243; sequence TVLSNVNTSSVQSAPGSSSLR. C2H2-type zinc fingers lie at residues 323–345, 360–383, 390–413, 420–443, and 477–499; these read FKCFSCTKVLKNNIRFMNHMKHH, TTCQHCYRQYPNPFQLQCHIESTH, TICKICELSFETEHMLLQHMKDTH, YICQVCQFRSSIFSDVETHFRSSH, and YRCPKCRLQFLTSKEKTEHKLEH. Over residues 523-578 the composition is skewed to low complexity; that stretch reads LGSSQSRASSPPSSTIPSTSLQLSVPKSKSTTTKNNSKVSANKATTTSPQTVATTT. Positions 523-608 are disordered; it reads LGSSQSRASS…YKQKRQRTRK (86 aa). The segment covering 579–592 has biased composition (polar residues); sequence GKPSASKPGTGTTK. Lysine 580 is covalently cross-linked (Glycyl lysine isopeptide (Lys-Gly) (interchain with G-Cter in SUMO2)). The segment covering 593–608 has biased composition (basic residues); the sequence is SKAKPSYKQKRQRTRK.

Its subcellular location is the nucleus. May function as a transcription factor. The polypeptide is Zinc finger protein 280C (Znf280c) (Mus musculus (Mouse)).